The following is a 176-amino-acid chain: Methylmalonyl-CoA epimerase, mitochondrial (176 aa).

The transit peptide at methionine 1–aspartate 36 directs the protein to the mitochondrion. A VOC domain is found at arginine 47–alanine 176. Co(2+) is bound at residue histidine 50. An N6-succinyllysine modification is found at lysine 114. Histidine 122 contacts Co(2+). Lysine 150 is modified (N6-acetyllysine; alternate). Lysine 150 carries the post-translational modification N6-succinyllysine; alternate. Glutamate 172 is a binding site for Co(2+).

It belongs to the methylmalonyl-CoA epimerase family.

It localises to the mitochondrion. It carries out the reaction (R)-methylmalonyl-CoA = (S)-methylmalonyl-CoA. In terms of biological role, methylmalonyl-CoA epimerase involved in propionyl-CoA metabolism. In Homo sapiens (Human), this protein is Methylmalonyl-CoA epimerase, mitochondrial.